The following is a 397-amino-acid chain: MVKETTYYDVLGVKPNATQEELKKAYRKLALKYHPDKNPNEGEKFKQISQAYEVLSDAKKRELYDKGGEQAIKEGGAGGGFGSPMDIFDMFFGGGGRMQRERRGKNVVHQLSVTLEDLYNGATRKLALQKNVICDKCEGRGGKKGAVECCPNCRGTGMQIRIHQIGPGMVQQIQSVCMECQGHGERISPKDRCKSCNGRKIVREKKILEVHIDKGMKDGQKITFHGEGDQEPGLEPGDIIIVLDQKDHAVFTRRGEDLFMCMDIQLVEALCGFQKPISTLDNRTIVITSHPGQIVKHGDIKCVLNEGMPIYRRPYEKGRLIIEFKINFPENGFLSPDKLSLLEKLLPERKEVEETDEMDQVELVDFDPNQERRRHYNGEAYEDDEHHPRGGVQCQTS.

Residues Thr6–Gly68 form the J domain. Lys66 bears the N6-acetyllysine mark. A Phosphoserine modification is found at Ser83. The CR-type zinc-finger motif lies at Gly121 to Lys205. 8 residues coordinate Zn(2+): Cys134, Cys137, Cys150, Cys153, Cys177, Cys180, Cys193, and Cys196. CXXCXGXG motif repeat units follow at residues Cys134–Gly141, Cys150–Gly157, Cys177–Gly184, and Cys193–Lys200. Ser335 is modified (phosphoserine). Residues Val352–Ser397 form a disordered region. Residues Glu353–Asp365 show a composition bias toward acidic residues. Tyr381 carries the post-translational modification Phosphotyrosine. The residue at position 394 (Cys394) is a Cysteine methyl ester. A lipid anchor (S-farnesyl cysteine) is attached at Cys394. The propeptide at Gln395 to Ser397 is removed in mature form.

In terms of assembly, identified in a complex with HSPA1B and BAX. Interacts with RNF207.

Its subcellular location is the membrane. The protein resides in the cytoplasm. The protein localises to the microsome. It localises to the mitochondrion. It is found in the nucleus. Its subcellular location is the perinuclear region. Its function is as follows. Co-chaperone for HSPA8/Hsc70. Plays a role in protein transport into mitochondria via its role as co-chaperone. Functions as co-chaperone for HSPA1B and negatively regulates the translocation of BAX from the cytosol to mitochondria in response to cellular stress, thereby protecting cells against apoptosis. Stimulates ATP hydrolysis, but not the folding of unfolded proteins mediated by HSPA1A (in vitro). Promotes apoptosis in response to cellular stress mediated by exposure to anisomycin or UV. The protein is DnaJ homolog subfamily A member 1 (DNAJA1) of Chlorocebus aethiops (Green monkey).